A 604-amino-acid chain; its full sequence is Putative ankyrin repeat protein L56 (604 aa).

13 ANK repeats span residues 77 to 106, 135 to 164, 166 to 189, 190 to 219, 221 to 247, 248 to 277, 314 to 341, 342 to 371, 380 to 410, 445 to 474, 475 to 504, 505 to 534, and 535 to 565; these read IDRY…DILV, FFKS…NADG, LSAC…YDDN, TIYH…EDKR, NVFI…KWKI, DVEF…DSKY, KFSK…NENV, DLRE…EFTD, EHIT…SRSY, YSQA…DIKP, ITNI…DITI, NDNR…DIRT, and DDDY…EPSN.

The protein is Putative ankyrin repeat protein L56 of Acanthamoeba polyphaga (Amoeba).